The primary structure comprises 358 residues: Na(+)/H(+) exchange regulatory cofactor NHE-RF1 (358 aa).

The residue at position 2 (S2) is an N-acetylserine. Phosphoserine is present on residues S2 and S46. The PDZ 1 domain occupies 14–94 (LCCLEKGPNG…AVRLLVVDPE (81 aa)). Low complexity predominate over residues 114–132 (QEAPGQAEPPAAAEVQGAG). A disordered region spans residues 114–192 (QEAPGQAEPP…DPDSPAEASG (79 aa)). Over residues 135–152 (NEPREADKSHPEQRELRP) the composition is skewed to basic and acidic residues. The PDZ 2 domain maps to 154–234 (LCTMKKGPSG…ETKLLVVDRE (81 aa)). A phosphoserine mark is found at S162, S269, S280, S290, and S291. The disordered stretch occupies residues 277-358 (ALESPRPALV…SKKNELFSNL (82 aa)). A compositionally biased stretch (polar residues) spans 288 to 306 (SASSDTSEELNSQDSPPKQ). T293 is subject to Phosphothreonine. Residues S294, S299, and S302 each carry the phosphoserine modification. The segment covering 307–319 (DSTAPSSTSSSDP) has biased composition (low complexity). The span at 348-358 (WSKKNELFSNL) shows a compositional bias: basic and acidic residues.

In terms of assembly, homodimer, and heterodimer with NHERF2. Binds the N-termini of EZR, RDX and MSN. Binds the C-termini of PDGFRA, PDGFRB, ADRB2, NOS2 and CFTR. Binds ARHGAP17, EPI64, RACK1, OPRK1, GNAQ, CTNNB1 and PLCB3. Binds PDZK1. Interacts with CLCN3. Binds the C-terminus of PAG1. In resting T-cells, part of a PAG1-NHERF1-MSN complex which is disrupted upon TCR activation. Forms a complex with CFTR and SLC4A7. Forms a complex with SLC4A7 and ATP6V1B1. Interacts with TRPC4 (via the PDZ-binding domain). Directly interacts with HTR4. Interacts (via the PDZ 1 domain) with PODXL (via the C-terminal PDZ-binding motif DTHL); interaction is not detected in glomerular epithelium cells. Interacts (via the PDZ 1 domain) with PODXL (via the C-terminal PDZ-binding motif DTHL); the interaction take place early in the secretory pathway and is necessary for its apical membrane sorting. Interacts with SLC26A3. Interacts with MCC. Interacts with SLC34A1. Interacts (via the PDZ domains) with SLC26A6 isoform 4 and isoform 5. Interacts (via PDZ domains) with ACE2 (via PDZ-binding motif); the interaction may enhance ACE2 membrane residence. Phosphorylated on serine residues. As to expression, detected in liver, kidney, pancreas, prostate, spleen, small intestine and placenta, in particular in the syncytiotrophoblast.

It localises to the cytoplasm. It is found in the apical cell membrane. The protein localises to the endomembrane system. Its subcellular location is the cell projection. The protein resides in the filopodium. It localises to the ruffle. It is found in the microvillus. In terms of biological role, scaffold protein that connects plasma membrane proteins with members of the ezrin/moesin/radixin family and thereby helps to link them to the actin cytoskeleton and to regulate their surface expression. Necessary for recycling of internalized ADRB2. Was first known to play a role in the regulation of the activity and subcellular location of SLC9A3. Necessary for cAMP-mediated phosphorylation and inhibition of SLC9A3. May enhance Wnt signaling. May participate in HTR4 targeting to microvilli. Involved in the regulation of phosphate reabsorption in the renal proximal tubules. Involved in sperm capacitation. May participate in the regulation of the chloride and bicarbonate homeostasis in spermatozoa. The sequence is that of Na(+)/H(+) exchange regulatory cofactor NHE-RF1 from Homo sapiens (Human).